The sequence spans 231 residues: CLAVATA3/ESR (CLE)-related protein 4B-2 (231 aa).

The first 21 residues, Met1–Ala21, serve as a signal peptide directing secretion. The required for secretion from the host cytoplasm to the host apoplasm stretch occupies residues Ala21–Met83. An N-linked (GlcNAc...) asparagine glycan is attached at Asn32. Positions Arg116 to His231 are disordered. Basic and acidic residues-rich tracts occupy residues His125–Val137 and Pro144–Gly221. The A-1 repeat unit spans residues Glu127 to Lys135. Residues Glu127–Lys219 are 5 X approximate repeat A. Residues Arg136–His147 form a CLE-1 repeat. Residues Arg136–His231 form a 5 X approximate repeat CLE region. The A-2 repeat unit spans residues Glu148 to Lys156. Residues Arg157–His168 form a CLE-2 repeat. The A-3 repeat unit spans residues Glu169–Lys177. Residues Arg178–His189 form a CLE-3 repeat. The A-4 repeat unit spans residues Glu190–Lys198. One copy of the CLE-4 repeat lies at Arg199–His210. The stretch at Glu211 to Lys219 is one A-5 repeat. The CLE-5 repeat unit spans residues Arg220–His231.

The protein belongs to the CLV3/ESR signal peptide family. In terms of tissue distribution, highly expressed exclusively within the dorsal esophageal gland cell during syncytium formation in host plants.

It localises to the secreted. The protein localises to the host cytoplasm. Its subcellular location is the host extracellular space. It is found in the extracellular space. The protein resides in the apoplast. Functionally, mimics host plant CLE extracellular signal peptides that regulate cell fate. May play a role in the differentiation or division of feeding cells (syncytia) induced in plant roots during infection. This is CLAVATA3/ESR (CLE)-related protein 4B-2 (CLE-4B-2) from Globodera rostochiensis (Golden nematode worm).